The following is a 228-amino-acid chain: Death domain-containing membrane protein NRADD (228 aa).

At 1 to 52 (MLHNVSKGVVYSDTALKGQDGDREGMWVGAGGALAPNTSSLFPPEPPGASSN) the chain is on the extracellular side. Asn-4 and Asn-37 each carry an N-linked (GlcNAc...) asparagine glycan. Residues 53 to 73 (IIPVYCALLATVVLGLLAYVA) form a helical; Signal-anchor for type III membrane protein membrane-spanning segment. Topologically, residues 74–228 (FKCWRSRKQR…SSPAEGCSVV (155 aa)) are cytoplasmic. The 80-residue stretch at 143 to 222 (EEVQRLLILG…DVVQVLSSPA (80 aa)) folds into the Death domain.

Interacts with NTRK1. Isoform 1 and isoform 2 interact with NGFR. Interacts with SORT1. Isoform 1 is N-glycosylated. Isoform 2 is not N-glycosylated. As to expression, detected in embryo, including embryonic brain. Detected at very low levels in adult testis, spleen, thymus and lung.

Its subcellular location is the cell membrane. The protein localises to the nucleus. Functionally, modulates NTRK1 signaling. Can activate several intracellular signaling pathways, leading to activation of JUN. Promotes translocation of SORT1 to the cell membrane, and thereby hinders lysosomal degradation of SOTR1 and promotes its interaction with NGFR. Both isoform 1 and isoform 2 promote apoptosis. The protein is Death domain-containing membrane protein NRADD (Nradd) of Rattus norvegicus (Rat).